A 332-amino-acid polypeptide reads, in one-letter code: Hdr-like menaquinol oxidoreductase cytochrome b-like subunit (332 aa).

5 helical membrane passes run 3 to 23, 97 to 117, 143 to 163, 177 to 197, and 230 to 250; these read GVIFGVIVPYIAVAIFVIGVI, DARWLWLFGILFHYSLLLVLI, VFIPSVYMSGLAIVAALFLLW, LPSDHFALILLLAITISGNVM, and IEPIFYVHFALASFLLAYFPF.

Consists of five subunits: an integral membrane subunit, a cytochrome b-like subunit, a cytochrome c subunit and two iron-sulfur subunits.

The protein localises to the cell membrane. Its function is as follows. Has menaquinol-oxidizing activity. HmeC and HmeD subunits may together mediate electron transfer from menaquinol to an unidentified electron acceptor on the cytoplasmic side of the membrane. In Archaeoglobus fulgidus (strain ATCC 49558 / DSM 4304 / JCM 9628 / NBRC 100126 / VC-16), this protein is Hdr-like menaquinol oxidoreductase cytochrome b-like subunit (hmeC).